Reading from the N-terminus, the 564-residue chain is Aspyridones efflux protein (564 aa).

Residues 1-17 show a composition bias toward low complexity; the sequence is MHPDQADTAAMQQQTTT. The disordered stretch occupies residues 1-49; sequence MHPDQADTAAMQQQTTTECSDRSRPEKAEEGHAREHTVTRTCSREPEQT. Residues 19–47 are compositionally biased toward basic and acidic residues; the sequence is CSDRSRPEKAEEGHAREHTVTRTCSREPE. 10 consecutive transmembrane segments (helical) span residues 66 to 86, 127 to 147, 158 to 178, 185 to 205, 216 to 236, 260 to 280, 287 to 307, 335 to 355, 368 to 388, and 392 to 412; these read AICLTIFLISVDFSILATAIP, WTFLLALLTFEVGSIICATAP, IAGCGNAGLLSGALLILTHSV, LFMAMTGGTYGVAAIAGPPLG, WCFWINLPIGALTFLVIVFLF, VGTLMFMPAIICVLLALQWGG, SGIVVALLVVGGVLVIAFGIV, FALGAAFFVFIYFLPIWFQGV, LPMLVGNIVATAVSGVLVTII, and APFMILGTILASVGAGLLLLF. Asn-415 is a glycosylation site (N-linked (GlcNAc...) asparagine). Helical transmembrane passes span 416 to 436 and 454 to 474; these read VTAASWIGYQAIVGLGIGFGW and IATATLSFAQTLGGTLFVSVA. Asn-524 carries N-linked (GlcNAc...) asparagine glycosylation. A helical transmembrane segment spans residues 528–548; it reads LSAFFVATIMAIMSLVGCTFV.

It belongs to the major facilitator superfamily. TCR/Tet family.

The protein localises to the cell membrane. Efflux pump that may be involved in the secretion of leporins. The polypeptide is Aspyridones efflux protein (TP) (Neocamarosporium betae (Beet black rot fungus)).